A 780-amino-acid chain; its full sequence is Translation initiation factor IF-2 (780 aa).

The interval 44-194 (RQLDNAVDGT…TPPKPKELPE (151 aa)) is disordered. Residues 53 to 65 (TNKKAEAPKKETT) are compositionally biased toward basic and acidic residues. The segment covering 66–81 (SNENGNSKGPNKPNMT) has biased composition (polar residues). 2 stretches are compositionally biased toward low complexity: residues 82–93 (NSNEKSNKPNKP) and 117–168 (ANTS…NNKG). A tr-type G domain is found at 281 to 450 (ERPPVVTIMG…LLVSEVEELK (170 aa)). Residues 290 to 297 (GHVDHGKT) form a G1 region. 290–297 (GHVDHGKT) serves as a coordination point for GTP. A G2 region spans residues 315–319 (GITQH). Residues 336–339 (DTPG) form a G3 region. GTP contacts are provided by residues 336-340 (DTPGH) and 390-393 (NKID). The segment at 390–393 (NKID) is G4. Residues 426–428 (SAK) are G5.

This sequence belongs to the TRAFAC class translation factor GTPase superfamily. Classic translation factor GTPase family. IF-2 subfamily.

Its subcellular location is the cytoplasm. In terms of biological role, one of the essential components for the initiation of protein synthesis. Protects formylmethionyl-tRNA from spontaneous hydrolysis and promotes its binding to the 30S ribosomal subunits. Also involved in the hydrolysis of GTP during the formation of the 70S ribosomal complex. The polypeptide is Translation initiation factor IF-2 (Listeria welshimeri serovar 6b (strain ATCC 35897 / DSM 20650 / CCUG 15529 / CIP 8149 / NCTC 11857 / SLCC 5334 / V8)).